The sequence spans 61 residues: Large ribosomal subunit protein bL32 (61 aa).

This sequence belongs to the bacterial ribosomal protein bL32 family.

This is Large ribosomal subunit protein bL32 from Ehrlichia chaffeensis (strain ATCC CRL-10679 / Arkansas).